The following is a 262-amino-acid chain: Transmembrane and immunoglobulin domain-containing protein 1 (262 aa).

Positions Met1 to Ser29 are cleaved as a signal peptide. The Ig-like C2-type 1 domain maps to Val30 to Ser114. Residues Val30–Pro220 lie on the Extracellular side of the membrane. A disulfide bond links Cys54 and Cys103. Residues Asn58, Asn83, Asn118, Asn158, and Asn190 are each glycosylated (N-linked (GlcNAc...) asparagine). Residues Pro122–Asp207 enclose the Ig-like C2-type 2 domain. Cys143 and Cys195 are disulfide-bonded. A helical membrane pass occupies residues Ile221–Ala241. Topologically, residues Arg242 to Leu262 are cytoplasmic.

As to quaternary structure, homodimer. In terms of processing, N-glycosylated.

The protein resides in the cell membrane. It localises to the cytoplasm. Its function is as follows. May control cell-cell adhesion, cell migration and proliferation, cell morphology, and protects renal epithelial cells from oxidative cell injury to promote cell survival. This chain is Transmembrane and immunoglobulin domain-containing protein 1, found in Homo sapiens (Human).